The following is a 260-amino-acid chain: Endonuclease NucS (260 aa).

This sequence belongs to the NucS endonuclease family.

It localises to the cytoplasm. In terms of biological role, cleaves both 3' and 5' ssDNA extremities of branched DNA structures. This Methanopyrus kandleri (strain AV19 / DSM 6324 / JCM 9639 / NBRC 100938) protein is Endonuclease NucS.